The primary structure comprises 308 residues: Acetyl-coenzyme A carboxylase carboxyl transferase subunit alpha (308 aa).

The CoA carboxyltransferase C-terminal domain maps to 36–286 (ELEKEVSSVY…ESYFLKAFEE (251 aa)).

The protein belongs to the AccA family. In terms of assembly, acetyl-CoA carboxylase is a heterohexamer composed of biotin carboxyl carrier protein (AccB), biotin carboxylase (AccC) and two subunits each of ACCase subunit alpha (AccA) and ACCase subunit beta (AccD).

The protein resides in the cytoplasm. The catalysed reaction is N(6)-carboxybiotinyl-L-lysyl-[protein] + acetyl-CoA = N(6)-biotinyl-L-lysyl-[protein] + malonyl-CoA. It participates in lipid metabolism; malonyl-CoA biosynthesis; malonyl-CoA from acetyl-CoA: step 1/1. In terms of biological role, component of the acetyl coenzyme A carboxylase (ACC) complex. First, biotin carboxylase catalyzes the carboxylation of biotin on its carrier protein (BCCP) and then the CO(2) group is transferred by the carboxyltransferase to acetyl-CoA to form malonyl-CoA. The polypeptide is Acetyl-coenzyme A carboxylase carboxyl transferase subunit alpha (Helicobacter hepaticus (strain ATCC 51449 / 3B1)).